A 530-amino-acid chain; its full sequence is Bifunctional purine biosynthesis protein PurH (530 aa).

In terms of domain architecture, MGS-like spans 1–148 (MNNARPIRRA…KNHKDVTIVV (148 aa)).

The protein belongs to the PurH family.

The catalysed reaction is (6R)-10-formyltetrahydrofolate + 5-amino-1-(5-phospho-beta-D-ribosyl)imidazole-4-carboxamide = 5-formamido-1-(5-phospho-D-ribosyl)imidazole-4-carboxamide + (6S)-5,6,7,8-tetrahydrofolate. The enzyme catalyses IMP + H2O = 5-formamido-1-(5-phospho-D-ribosyl)imidazole-4-carboxamide. The protein operates within purine metabolism; IMP biosynthesis via de novo pathway; 5-formamido-1-(5-phospho-D-ribosyl)imidazole-4-carboxamide from 5-amino-1-(5-phospho-D-ribosyl)imidazole-4-carboxamide (10-formyl THF route): step 1/1. It participates in purine metabolism; IMP biosynthesis via de novo pathway; IMP from 5-formamido-1-(5-phospho-D-ribosyl)imidazole-4-carboxamide: step 1/1. The chain is Bifunctional purine biosynthesis protein PurH from Vibrio atlanticus (strain LGP32) (Vibrio splendidus (strain Mel32)).